The sequence spans 412 residues: Keratin, type I microfibrillar 48 kDa, component 8C-1 (412 aa).

Position 1 is an N-acetylserine (Ser-1). The segment at 1–55 (SFNFCLPNLSFRSSCSSRPCVPSSCCGTTLPGACNIPANVGSCNWFCEGSFDGNE) is head. The IF rod domain occupies 55–366 (EKETMQFLND…GLLDSEDCKL (312 aa)). The segment at 56–90 (KETMQFLNDRLASYLEKVRQLERENAELESRILER) is coil 1A. Positions 91-101 (SQQQEPLVCPN) are linker 1. Residues 102–202 (YQSYFRTIEE…HEEEVNTLRS (101 aa)) are coil 1B. Residues 203–218 (QLGDRLNVEVDAAPTV) form a linker 12 region. Residues 219 to 362 (DLNRVLNETR…NTYRGLLDSE (144 aa)) form a coil 2 region. Residues 363–412 (DCKLPCNPCATTNACGKTITPCISSPCAPAAPCTPCVPRSRCGPCNSYVR) form a tail region.

The protein belongs to the intermediate filament family.

Wool microfibrillar keratin. In Ovis aries (Sheep), this protein is Keratin, type I microfibrillar 48 kDa, component 8C-1.